The following is a 446-amino-acid chain: UDP-N-acetylmuramoylalanine--D-glutamate ligase (446 aa).

Residue 118-124 (GSNGKST) coordinates ATP.

The protein belongs to the MurCDEF family.

The protein localises to the cytoplasm. It carries out the reaction UDP-N-acetyl-alpha-D-muramoyl-L-alanine + D-glutamate + ATP = UDP-N-acetyl-alpha-D-muramoyl-L-alanyl-D-glutamate + ADP + phosphate + H(+). The protein operates within cell wall biogenesis; peptidoglycan biosynthesis. Functionally, cell wall formation. Catalyzes the addition of glutamate to the nucleotide precursor UDP-N-acetylmuramoyl-L-alanine (UMA). This chain is UDP-N-acetylmuramoylalanine--D-glutamate ligase, found in Pseudoalteromonas translucida (strain TAC 125).